The sequence spans 346 residues: MSGKITDFFEKKTTTTIDEAENKDNDKELTSTTTTTTTTSTTSKKKVAAAPKKKAAVASKKRKHESSDEETDKEEQQNDDDDDGEEKVENNNNNKKLKNEEKSEEINSTITDNNYYDDIENYFTDKQWKEALSGEFGKAYFKKMITQLNKRYSSKEKPIYPPKNEIFSAFNYAHLEDVKVVIIGQDPYHGKGQAHGLSFSVKKGVSPPPSLINIYKELETDIEGFKRPLKNGFLEPWARQGVFLLNAVLTVEEATPNSHKDFGWADFTDAVLKILSKQDQPIVFILWGGFAQKKEKLFTNKNHLVLKSGHPSPLSIKHFIGCKHFSKSNEFLKSKGIEEIDWKITE.

The tract at residues 1-105 (MSGKITDFFE…KLKNEEKSEE (105 aa)) is disordered. Residues 20–29 (AENKDNDKEL) are compositionally biased toward basic and acidic residues. A compositionally biased stretch (low complexity) spans 30 to 42 (TSTTTTTTTTSTT). Over residues 43-64 (SKKKVAAAPKKKAAVASKKRKH) the composition is skewed to basic residues. Over residues 67–86 (SDEETDKEEQQNDDDDDGEE) the composition is skewed to acidic residues. The Proton acceptor role is filled by Asp186.

It belongs to the uracil-DNA glycosylase (UDG) superfamily. UNG family.

It localises to the mitochondrion. The protein localises to the nucleus. It carries out the reaction Hydrolyzes single-stranded DNA or mismatched double-stranded DNA and polynucleotides, releasing free uracil.. Functionally, excises uracil residues from the DNA which can arise as a result of misincorporation of dUMP residues by DNA polymerase or due to deamination of cytosine. The protein is Uracil-DNA glycosylase (uglA) of Dictyostelium discoideum (Social amoeba).